The sequence spans 406 residues: NAD(P)H-quinone oxidoreductase subunit H, organellar chromatophore (406 aa).

It belongs to the complex I 49 kDa subunit family. NDH is composed of at least 16 different subunits, 5 of which are encoded in the nucleus.

It is found in the plastid. Its subcellular location is the organellar chromatophore thylakoid membrane. It carries out the reaction a quinone + NADH + H(+) = a quinol + NAD(+). In terms of biological role, NDH shuttles electrons from NAD(P)H:plastoquinone, via FMN and iron-sulfur (Fe-S) centers, to quinones in the photosynthetic chain and possibly in a chloroplast respiratory chain. The immediate electron acceptor for the enzyme in this species is believed to be plastoquinone. Couples the redox reaction to proton translocation, and thus conserves the redox energy in a proton gradient. The sequence is that of NAD(P)H-quinone oxidoreductase subunit H, organellar chromatophore from Paulinella chromatophora.